Consider the following 519-residue polypeptide: 2-isopropylmalate synthase (519 aa).

Positions 5–267 constitute a Pyruvate carboxyltransferase domain; sequence VVIFDTTLRD…STNINYKEIY (263 aa). Residues Asp14, His202, His204, and Asn238 each coordinate Mn(2+). Residues 392–519 form a regulatory domain region; it reads SLKFFSVQSI…LKILKDFKKK (128 aa).

Belongs to the alpha-IPM synthase/homocitrate synthase family. LeuA type 1 subfamily. Homodimer. Requires Mn(2+) as cofactor.

The protein localises to the cytoplasm. The enzyme catalyses 3-methyl-2-oxobutanoate + acetyl-CoA + H2O = (2S)-2-isopropylmalate + CoA + H(+). It participates in amino-acid biosynthesis; L-leucine biosynthesis; L-leucine from 3-methyl-2-oxobutanoate: step 1/4. Functionally, catalyzes the condensation of the acetyl group of acetyl-CoA with 3-methyl-2-oxobutanoate (2-ketoisovalerate) to form 3-carboxy-3-hydroxy-4-methylpentanoate (2-isopropylmalate). The sequence is that of 2-isopropylmalate synthase from Buchnera aphidicola subsp. Acyrthosiphon pisum (strain APS) (Acyrthosiphon pisum symbiotic bacterium).